The following is an 87-amino-acid chain: Small ribosomal subunit protein bS20 (87 aa).

Residues 1 to 15 show a composition bias toward basic residues; sequence MANTRSAKKMVRKIA. Disordered regions lie at residues 1 to 22 and 64 to 87; these read MANTRSAKKMVRKIAARTDVNK and KGVTHKNTASRKVSRLSARVKAMA.

This sequence belongs to the bacterial ribosomal protein bS20 family.

Binds directly to 16S ribosomal RNA. In Hyphomonas neptunium (strain ATCC 15444), this protein is Small ribosomal subunit protein bS20.